The following is a 330-amino-acid chain: tRNA U34 carboxymethyltransferase (330 aa).

Carboxy-S-adenosyl-L-methionine is bound by residues lysine 91, tryptophan 105, lysine 110, glycine 130, 152–154 (DPS), 181–182 (IE), methionine 196, tyrosine 200, and arginine 315.

It belongs to the class I-like SAM-binding methyltransferase superfamily. CmoB family. Homotetramer.

The enzyme catalyses carboxy-S-adenosyl-L-methionine + 5-hydroxyuridine(34) in tRNA = 5-carboxymethoxyuridine(34) in tRNA + S-adenosyl-L-homocysteine + H(+). Its function is as follows. Catalyzes carboxymethyl transfer from carboxy-S-adenosyl-L-methionine (Cx-SAM) to 5-hydroxyuridine (ho5U) to form 5-carboxymethoxyuridine (cmo5U) at position 34 in tRNAs. In Shewanella pealeana (strain ATCC 700345 / ANG-SQ1), this protein is tRNA U34 carboxymethyltransferase.